The sequence spans 483 residues: Pre-glycoprotein polyprotein GP complex (483 aa).

Gly2 carries N-myristoyl glycine; by host lipidation. Residues 2–17 (GQLVSFIGEIPAIVHE) lie on the Extracellular side of the membrane. The helical transmembrane segment at 18-32 (ALNVALIAVSIIAIM) threads the bilayer. A topological domain (cytoplasmic) is located at residue Lys33. Residues 34-53 (GLINIWKSGLFQLIMFLILA) traverse the membrane as a helical segment. Extracellular loops occupy residues 54–58 (GRSCS) and 59–422 (ISIG…SLVD). A Zn(2+)-binding site is contributed by Cys57. N-linked (GlcNAc...) asparagine; by host glycans are attached at residues Asn73, Asn88, Asn130, and Asn179. 5 cysteine pairs are disulfide-bonded: Cys85-Cys223, Cys186-Cys204, Cys269-Cys282, Cys291-Cys300, and Cys354-Cys375. Residue Asn216 is glycosylated (N-linked (GlcNAc...) asparagine; by host). Asn355, Asn363, Asn380, and Asn385 each carry an N-linked (GlcNAc...) asparagine; by host glycan. A helical membrane pass occupies residues 423–443 (LCFWSTLFYTASIFLHLLHIP). The Cytoplasmic segment spans residues 444-483 (THRHIIGEGCPKPHRLTSDSLCACGFFQLKGRPTRWARIP). Zn(2+) contacts are provided by His445, His447, Cys453, His457, Cys465, and Cys467.

Belongs to the arenaviridae GPC protein family. As to quaternary structure, homotetramer; disulfide-linked. Homotetramer. GP2 homotetramers bind through ionic interactions with GP1 homotetramers to form the GP complex together with the stable signal peptide. The GP-C polyprotein interacts with the host protease MBTPS1/SKI-1 resulting in the polyprotein processing. In terms of processing, specific enzymatic cleavages in vivo yield mature proteins. GP-C polyprotein is cleaved in the endoplasmic reticulum by the host protease MBTPS1. Only cleaved glycoprotein is incorporated into virions. The SSP remains stably associated with the GP complex following cleavage by signal peptidase and plays crucial roles in the trafficking of GP through the secretory pathway. Post-translationally, myristoylation is necessary for GP2-mediated fusion activity.

The protein localises to the virion membrane. Its subcellular location is the host endoplasmic reticulum membrane. It is found in the host Golgi apparatus membrane. The protein resides in the host cell membrane. In terms of biological role, class I viral fusion protein that directs fusion of viral and host endosomal membranes, leading to delivery of the nucleocapsid into the cytoplasm. Membrane fusion is mediated by irreversible conformational changes induced upon acidification in the endosome. Stable signal peptide (SSP): cleaved and functions as a signal peptide. In addition, it is also retained as the third component of the GP complex. The SSP is required for efficient glycoprotein expression, post-translational maturation cleavage of GP1 and GP2, glycoprotein transport to the cell surface plasma membrane, formation of infectious virus particles, and acid pH-dependent glycoprotein-mediated cell fusion. Functionally, interacts with the host receptor. The polypeptide is Pre-glycoprotein polyprotein GP complex (Peromyscus californicus (California mouse)).